The primary structure comprises 377 residues: Homoserine O-succinyltransferase (377 aa).

The region spanning 50–358 (NAVLICHALS…PSSYGHDSFL (309 aa)) is the AB hydrolase-1 domain. Serine 156 (nucleophile) is an active-site residue. Arginine 226 serves as a coordination point for substrate. Catalysis depends on residues aspartate 321 and histidine 354. A substrate-binding site is contributed by aspartate 355.

Belongs to the AB hydrolase superfamily. MetX family. As to quaternary structure, homodimer.

The protein localises to the cytoplasm. It catalyses the reaction L-homoserine + succinyl-CoA = O-succinyl-L-homoserine + CoA. Its pathway is amino-acid biosynthesis; L-methionine biosynthesis via de novo pathway; O-succinyl-L-homoserine from L-homoserine: step 1/1. Transfers a succinyl group from succinyl-CoA to L-homoserine, forming succinyl-L-homoserine. This chain is Homoserine O-succinyltransferase, found in Nitrosomonas europaea (strain ATCC 19718 / CIP 103999 / KCTC 2705 / NBRC 14298).